The sequence spans 131 residues: UPF0102 protein YraN (131 aa).

The protein belongs to the UPF0102 family.

The polypeptide is UPF0102 protein YraN (Salmonella typhimurium (strain LT2 / SGSC1412 / ATCC 700720)).